A 64-amino-acid polypeptide reads, in one-letter code: Prokaryotic ubiquitin-like protein Pup (64 aa).

The tract at residues 20-58 is ARC ATPase binding; that stretch reads QELTLAASHVVSDVSEVDDLLDEIDGLLAENAEDFVTGF. An Isoglutamyl lysine isopeptide (Glu-Lys) (interchain with K-? in acceptor proteins) cross-link involves residue E64.

This sequence belongs to the prokaryotic ubiquitin-like protein family. Strongly interacts with the proteasome-associated ATPase ARC through a hydrophobic interface; the interacting region of Pup lies in its C-terminal half. There is one Pup binding site per ARC hexamer ring.

Its pathway is protein degradation; proteasomal Pup-dependent pathway. Functionally, protein modifier that is covalently attached to lysine residues of substrate proteins, thereby targeting them for proteasomal degradation. The tagging system is termed pupylation. The polypeptide is Prokaryotic ubiquitin-like protein Pup (Rothia mucilaginosa (strain DY-18) (Stomatococcus mucilaginosus)).